A 264-amino-acid chain; its full sequence is Proteasome subunit beta type-4 (264 aa).

Residue M1 is modified to N-acetylmethionine. Residues 1–45 constitute a propeptide that is removed on maturation; the sequence is MEALLESRSGLWAGGPAPGQFYRIPPTPGSSVDPVSALYGSPITR. Y102 carries the post-translational modification Phosphotyrosine.

This sequence belongs to the peptidase T1B family. As to quaternary structure, the 26S proteasome consists of a 20S proteasome core and two 19S regulatory subunits. The 20S proteasome core is a barrel-shaped complex made of 28 subunits that are arranged in four stacked rings. The two outer rings are each formed by seven alpha subunits, and the two inner rings are formed by seven beta subunits. The proteolytic activity is exerted by three beta-subunits PSMB5, PSMB6 and PSMB7. Forms a ternary complex with SMAD1 and OAZ1 before PSMB4 is incorporated into the 20S proteasome. Interacts with PRPF19.

The protein resides in the cytoplasm. It localises to the nucleus. Functionally, non-catalytic component of the 20S core proteasome complex involved in the proteolytic degradation of most intracellular proteins. This complex plays numerous essential roles within the cell by associating with different regulatory particles. Associated with two 19S regulatory particles, forms the 26S proteasome and thus participates in the ATP-dependent degradation of ubiquitinated proteins. The 26S proteasome plays a key role in the maintenance of protein homeostasis by removing misfolded or damaged proteins that could impair cellular functions, and by removing proteins whose functions are no longer required. Associated with the PA200 or PA28, the 20S proteasome mediates ubiquitin-independent protein degradation. This type of proteolysis is required in several pathways including spermatogenesis (20S-PA200 complex) or generation of a subset of MHC class I-presented antigenic peptides (20S-PA28 complex). SMAD1/OAZ1/PSMB4 complex mediates the degradation of the CREBBP/EP300 repressor SNIP1. This Bos taurus (Bovine) protein is Proteasome subunit beta type-4 (PSMB4).